The following is a 301-amino-acid chain: Rhodopsin (301 aa).

Residues 1–18 (LHMIHLHWYQYPPMNPMM) lie on the Extracellular side of the membrane. The helical transmembrane segment at 19-43 (YPLLLVFMLITGILCLAGNFVTIWV) threads the bilayer. At 44–55 (FMNTKSLRTPAN) the chain is on the cytoplasmic side. The helical transmembrane segment at 56-78 (LLVVNLAMSDFLMMFTMFPPMMI) threads the bilayer. Over 79–92 (TCYYHTWTLGATFC) the chain is Extracellular. C92 and C169 are joined by a disulfide. The helical transmembrane segment at 93-115 (EVYAFLGNLCGCASIWTMVFITF) threads the bilayer. The 'Ionic lock' involved in activated form stabilization signature appears at 116 to 118 (DRY). Topologically, residues 116 to 134 (DRYNVIVKGVAGEPLSTKK) are cytoplasmic. The helical transmembrane segment at 135–155 (ASLWILTVWVLSFTWCVAPFF) threads the bilayer. At 156–182 (GWNRYVPEGNLTGCGTDYLSEDILSRS) the chain is on the extracellular side. N165 carries N-linked (GlcNAc...) asparagine glycosylation. The helical transmembrane segment at 183 to 204 (YLYIYSTWVYFLPLAITIYCYV) threads the bilayer. Residues 205-245 (FIIKAVAAHEKGMRDQAKKMGIKSLRNEEAQKTSAECRLAK) are Cytoplasmic-facing. Residues 246-267 (IAMTTVALWFIAWTPYLLINWV) traverse the membrane as a helical segment. At 268-278 (GMFARSYLSPV) the chain is on the extracellular side. A helical membrane pass occupies residues 279–300 (YTIWGYVFAKANAVYNPIVYAI). K288 carries the N6-(retinylidene)lysine modification.

The protein belongs to the G-protein coupled receptor 1 family. Opsin subfamily. As to quaternary structure, homodimer. Interacts with GNAQ. In terms of processing, contains one covalently linked retinal chromophore.

The protein localises to the cell projection. Its subcellular location is the rhabdomere membrane. In terms of biological role, photoreceptor required for image-forming vision at low light intensity. Can use both retinal and 3-dehydroretinal as visual pigment. Light-induced isomerization of 11-cis to all-trans retinal triggers a conformational change that activates signaling via G-proteins. Signaling via GNAQ probably mediates the activation of phospholipase C. This Lacunicambarus ludovicianus (Painted devil crayfish) protein is Rhodopsin (RHO).